The chain runs to 84 residues: Seminal ribonuclease (84 aa).

3 disulfide bridges follow: C10-C65, C28-C80, and C35-C42. Residues 11–15, K36, and R55 each bind substrate; that span reads KPVNT.

It belongs to the pancreatic ribonuclease family. As to quaternary structure, homodimer; disulfide-linked.

Its subcellular location is the secreted. The catalysed reaction is an [RNA] containing cytidine + H2O = an [RNA]-3'-cytidine-3'-phosphate + a 5'-hydroxy-ribonucleotide-3'-[RNA].. It catalyses the reaction an [RNA] containing uridine + H2O = an [RNA]-3'-uridine-3'-phosphate + a 5'-hydroxy-ribonucleotide-3'-[RNA].. In Giraffa camelopardalis (Giraffe), this protein is Seminal ribonuclease (SRN).